The following is a 331-amino-acid chain: Major outer membrane protein P.IB (331 aa).

An N-terminal signal peptide occupies residues 1–19 (MKKSLIALTLAALPVAAMA).

It belongs to the Gram-negative porin family. As to quaternary structure, homotrimer.

It is found in the cell outer membrane. Serves as a slightly cation selective porin. This chain is Major outer membrane protein P.IB (porB), found in Neisseria meningitidis serogroup B.